The sequence spans 352 residues: Anthranilate phosphoribosyltransferase (352 aa).

Residues Gly-94, 97-98, Ser-102, 104-107, 122-130, and Ser-134 contribute to the 5-phospho-alpha-D-ribose 1-diphosphate site; these read GS, NIST, and KHGNRAVSS. Gly-94 contributes to the anthranilate binding site. Ser-106 contacts Mg(2+). Asn-125 is an anthranilate binding site. Residue Arg-180 coordinates anthranilate. Residues Asp-239 and Glu-240 each coordinate Mg(2+).

It belongs to the anthranilate phosphoribosyltransferase family. As to quaternary structure, homodimer. Requires Mg(2+) as cofactor.

It catalyses the reaction N-(5-phospho-beta-D-ribosyl)anthranilate + diphosphate = 5-phospho-alpha-D-ribose 1-diphosphate + anthranilate. Its pathway is amino-acid biosynthesis; L-tryptophan biosynthesis; L-tryptophan from chorismate: step 2/5. Its function is as follows. Catalyzes the transfer of the phosphoribosyl group of 5-phosphorylribose-1-pyrophosphate (PRPP) to anthranilate to yield N-(5'-phosphoribosyl)-anthranilate (PRA). The polypeptide is Anthranilate phosphoribosyltransferase (Citrifermentans bemidjiense (strain ATCC BAA-1014 / DSM 16622 / JCM 12645 / Bem) (Geobacter bemidjiensis)).